A 642-amino-acid chain; its full sequence is 4-hydroxy-3-methylbut-2-enyl diphosphate reductase (642 aa).

The 4-hydroxy-3-methylbut-2-enyl diphosphate reductase stretch occupies residues 1 to 282; that stretch reads MRKVMLAEKA…EEAISKMSEN (282 aa). Cys-13 is a [4Fe-4S] cluster binding site. (2E)-4-hydroxy-3-methylbut-2-enyl diphosphate contacts are provided by His-42 and His-77. Dimethylallyl diphosphate-binding residues include His-42 and His-77. Positions 42 and 77 each coordinate isopentenyl diphosphate. [4Fe-4S] cluster is bound at residue Cys-99. Residue His-127 participates in (2E)-4-hydroxy-3-methylbut-2-enyl diphosphate binding. Residue His-127 participates in dimethylallyl diphosphate binding. Position 127 (His-127) interacts with isopentenyl diphosphate. Residue Glu-129 is the Proton donor of the active site. Thr-165 serves as a coordination point for (2E)-4-hydroxy-3-methylbut-2-enyl diphosphate. Cys-193 contributes to the [4Fe-4S] cluster binding site. (2E)-4-hydroxy-3-methylbut-2-enyl diphosphate is bound by residues Ser-221, Ser-222, Asn-223, and Ser-266. Residues Ser-221, Ser-222, Asn-223, and Ser-266 each contribute to the dimethylallyl diphosphate site. Isopentenyl diphosphate is bound by residues Ser-221, Ser-222, Asn-223, and Ser-266. 3 consecutive S1 motif domains span residues 309–377, 484–552, and 569–638; these read GASV…LSVK, GQVV…LSVK, and GSVV…LSIR.

In the N-terminal section; belongs to the IspH family. The cofactor is [4Fe-4S] cluster.

It carries out the reaction isopentenyl diphosphate + 2 oxidized [2Fe-2S]-[ferredoxin] + H2O = (2E)-4-hydroxy-3-methylbut-2-enyl diphosphate + 2 reduced [2Fe-2S]-[ferredoxin] + 2 H(+). The catalysed reaction is dimethylallyl diphosphate + 2 oxidized [2Fe-2S]-[ferredoxin] + H2O = (2E)-4-hydroxy-3-methylbut-2-enyl diphosphate + 2 reduced [2Fe-2S]-[ferredoxin] + 2 H(+). Its pathway is isoprenoid biosynthesis; dimethylallyl diphosphate biosynthesis; dimethylallyl diphosphate from (2E)-4-hydroxy-3-methylbutenyl diphosphate: step 1/1. It participates in isoprenoid biosynthesis; isopentenyl diphosphate biosynthesis via DXP pathway; isopentenyl diphosphate from 1-deoxy-D-xylulose 5-phosphate: step 6/6. In terms of biological role, catalyzes the conversion of 1-hydroxy-2-methyl-2-(E)-butenyl 4-diphosphate (HMBPP) into a mixture of isopentenyl diphosphate (IPP) and dimethylallyl diphosphate (DMAPP). Acts in the terminal step of the DOXP/MEP pathway for isoprenoid precursor biosynthesis. This is 4-hydroxy-3-methylbut-2-enyl diphosphate reductase from Clostridium acetobutylicum (strain ATCC 824 / DSM 792 / JCM 1419 / IAM 19013 / LMG 5710 / NBRC 13948 / NRRL B-527 / VKM B-1787 / 2291 / W).